A 717-amino-acid polypeptide reads, in one-letter code: Glycine--tRNA ligase beta subunit (717 aa).

Belongs to the class-II aminoacyl-tRNA synthetase family. As to quaternary structure, tetramer of two alpha and two beta subunits.

It localises to the cytoplasm. It carries out the reaction tRNA(Gly) + glycine + ATP = glycyl-tRNA(Gly) + AMP + diphosphate. The polypeptide is Glycine--tRNA ligase beta subunit (Gloeothece citriformis (strain PCC 7424) (Cyanothece sp. (strain PCC 7424))).